We begin with the raw amino-acid sequence, 374 residues long: MSDHIRAASSPSRHGSEHGWQHAVTPQQRNRILVATWMFTLCFMILVMVMLGGATRLTGSGLSIMEWAPLMGTLPPTSQTEWERLYALYQKIPQYALVNHGFGLDGFKHIFWLEWTHRLWGRLIGLVLLLPLIFLAVTRRIERSLIPRLILIFVLGGLQGAVGWFMVASGFFPDSTAVSPYRLVVHLSFALLLYSALLWTALSVLNPEPRPLPGTVGLRRMSAVTLGLVCITIIAGGFVAGIHAGLDYNTFPLMDGRLVPEGYGEGHRAMFENIPTVQFDHRLLATLTALTALLTGLIGFRRGGNARRAVLPLMVAVILQYALGIATLLSVVAVPVAVVHQGMAVLLLTAAIVTLHSLRGAGRTASINAPASSH.

The interval 1-22 (MSDHIRAASSPSRHGSEHGWQH) is disordered. The next 5 helical transmembrane spans lie at 32–52 (ILVA…VMLG), 118–138 (RLWG…LAVT), 149–169 (LILI…MVAS), 184–204 (VVHL…ALSV), and 226–246 (LGLV…HAGL). Histidine 281 provides a ligand contact to heme. Helical transmembrane passes span 283-300 (LLAT…LIGF), 309-329 (AVLP…ATLL), and 332-352 (VAVP…TAAI). Histidine 340 is a heme binding site.

The protein belongs to the COX15/CtaA family. Type 2 subfamily. In terms of assembly, interacts with CtaB. It depends on heme b as a cofactor.

The protein resides in the cell membrane. It catalyses the reaction Fe(II)-heme o + 2 A + H2O = Fe(II)-heme a + 2 AH2. The protein operates within porphyrin-containing compound metabolism; heme A biosynthesis; heme A from heme O: step 1/1. Its function is as follows. Catalyzes the conversion of heme O to heme A by two successive hydroxylations of the methyl group at C8. The first hydroxylation forms heme I, the second hydroxylation results in an unstable dihydroxymethyl group, which spontaneously dehydrates, resulting in the formyl group of heme A. The polypeptide is Heme A synthase (Granulibacter bethesdensis (strain ATCC BAA-1260 / CGDNIH1)).